Here is a 614-residue protein sequence, read N- to C-terminus: Zinc finger protein 276 (614 aa).

The segment at 1-50 (MKRDRLGRFLSPGSSRQCGASDGGGGVSRTRGRPSLSGGPRVDGATARRA) is disordered. The ZAD domain maps to 77 to 163 (GHCRLCHGKF…LQRVNASPAG (87 aa)). Residues C79, C82, C136, and C139 each contribute to the Zn(2+) site. The disordered stretch occupies residues 268–420 (APRLPQHRGW…KKPGPKPGWK (153 aa)). A compositionally biased stretch (acidic residues) spans 357 to 369 (SDLSEGDVLSEDE). Residues 386–408 (YPERKVSGKKSESKEAKKSEEPR) are compositionally biased toward basic and acidic residues. The span at 409–420 (IRKKPGPKPGWK) shows a compositional bias: basic residues. 5 consecutive C2H2-type zinc fingers follow at residues 434–458 (YKCPYQGCTAVYRGADGMKKHIKEH), 465–490 (RPCPHPGCNKVFMIDRYLQRHVKLIH), 496–518 (YICDECGQTFKQRKHLLVHQMRH), 524–546 (LQCEVCGFQCRQRASLKYHMTKH), and 554–577 (FACDQCGRRFEKAHNLNVHMSMVH). A disordered region spans residues 583–614 (QDKALPLEAEPPPGPPSPSVTTEGQAVKPEPT). Residues 591–600 (AEPPPGPPSP) are compositionally biased toward pro residues.

The protein localises to the nucleus. It is found in the chromosome. It localises to the centromere. The protein resides in the kinetochore. Functionally, may be involved in transcriptional regulation. The polypeptide is Zinc finger protein 276 (ZNF276) (Homo sapiens (Human)).